Here is a 206-residue protein sequence, read N- to C-terminus: Inner membrane-spanning protein YciB (206 aa).

A run of 5 helical transmembrane segments spans residues 50 to 70, 78 to 98, 105 to 125, 150 to 170, and 173 to 193; these read PILL…GYLL, GTLW…IYFH, WKPT…QIFL, LSWV…AFNF, and AAWV…FIII.

The protein belongs to the YciB family.

The protein resides in the cell inner membrane. Its function is as follows. Plays a role in cell envelope biogenesis, maintenance of cell envelope integrity and membrane homeostasis. The polypeptide is Inner membrane-spanning protein YciB (Herminiimonas arsenicoxydans).